Reading from the N-terminus, the 313-residue chain is CRISPR-associated endonuclease Cas1 1 (313 aa).

Mn(2+)-binding residues include glutamate 144, histidine 211, and aspartate 224. Residues 288–313 are disordered; it reads PPLDAPEAVDPVIPPEEPSGDDGHRG.

Belongs to the CRISPR-associated endonuclease Cas1 family. Homodimer, forms a heterotetramer with a Cas2 homodimer. The cofactor is Mg(2+). Requires Mn(2+) as cofactor.

In terms of biological role, CRISPR (clustered regularly interspaced short palindromic repeat), is an adaptive immune system that provides protection against mobile genetic elements (viruses, transposable elements and conjugative plasmids). CRISPR clusters contain spacers, sequences complementary to antecedent mobile elements, and target invading nucleic acids. CRISPR clusters are transcribed and processed into CRISPR RNA (crRNA). Acts as a dsDNA endonuclease. Involved in the integration of spacer DNA into the CRISPR cassette. The polypeptide is CRISPR-associated endonuclease Cas1 1 (Rhodospirillum rubrum (strain ATCC 11170 / ATH 1.1.1 / DSM 467 / LMG 4362 / NCIMB 8255 / S1)).